The primary structure comprises 375 residues: Queuine tRNA-ribosyltransferase (375 aa).

Catalysis depends on D90, which acts as the Proton acceptor. Substrate is bound by residues 90 to 94, D144, Q190, and G217; that span reads DSGGF. The interval 248-254 is RNA binding; the sequence is GIGTPHY. D267 functions as the Nucleophile in the catalytic mechanism. An RNA binding; important for wobble base 34 recognition region spans residues 272–276; the sequence is TRIAR. Positions 305, 307, 310, and 336 each coordinate Zn(2+).

It belongs to the queuine tRNA-ribosyltransferase family. In terms of assembly, homodimer. Within each dimer, one monomer is responsible for RNA recognition and catalysis, while the other monomer binds to the replacement base PreQ1. Zn(2+) is required as a cofactor.

The enzyme catalyses 7-aminomethyl-7-carbaguanine + guanosine(34) in tRNA = 7-aminomethyl-7-carbaguanosine(34) in tRNA + guanine. It functions in the pathway tRNA modification; tRNA-queuosine biosynthesis. Its function is as follows. Catalyzes the base-exchange of a guanine (G) residue with the queuine precursor 7-aminomethyl-7-deazaguanine (PreQ1) at position 34 (anticodon wobble position) in tRNAs with GU(N) anticodons (tRNA-Asp, -Asn, -His and -Tyr). Catalysis occurs through a double-displacement mechanism. The nucleophile active site attacks the C1' of nucleotide 34 to detach the guanine base from the RNA, forming a covalent enzyme-RNA intermediate. The proton acceptor active site deprotonates the incoming PreQ1, allowing a nucleophilic attack on the C1' of the ribose to form the product. After dissociation, two additional enzymatic reactions on the tRNA convert PreQ1 to queuine (Q), resulting in the hypermodified nucleoside queuosine (7-(((4,5-cis-dihydroxy-2-cyclopenten-1-yl)amino)methyl)-7-deazaguanosine). The chain is Queuine tRNA-ribosyltransferase from Borrelia hermsii (strain HS1 / DAH).